Here is a 273-residue protein sequence, read N- to C-terminus: MQHPTPDALHARLAARRFILAGPCALEDFDVAMETAHAVREAAEAAGLFAVFKSSWDKANRTSITSFRGPGLVRGMEWLARIREESGLPVVTDIHLPEQAAPVAEVADIIQIPAFLCRQTDLLVAAAATGRVVNVKKGQFVAPWDMRPAVEKLRAAGNERILLTERGTSFGYNNLVVDYRSIPTMQGFGVPVVFDATHSVQLPGGLGGSSGGERRHVPVLARAAVAAGVDGVFLECHPDPDKALCDGPNSWPLDRLPALLKELSALWSLEHVC.

The protein belongs to the KdsA family.

The protein resides in the cytoplasm. The catalysed reaction is D-arabinose 5-phosphate + phosphoenolpyruvate + H2O = 3-deoxy-alpha-D-manno-2-octulosonate-8-phosphate + phosphate. It functions in the pathway carbohydrate biosynthesis; 3-deoxy-D-manno-octulosonate biosynthesis; 3-deoxy-D-manno-octulosonate from D-ribulose 5-phosphate: step 2/3. The protein operates within bacterial outer membrane biogenesis; lipopolysaccharide biosynthesis. This Nitratidesulfovibrio vulgaris (strain DP4) (Desulfovibrio vulgaris) protein is 2-dehydro-3-deoxyphosphooctonate aldolase.